Reading from the N-terminus, the 530-residue chain is Tyrosinase (530 aa).

Residues 1–17 form the signal peptide; sequence MLLAALYCLLWSFRTSA. At 19-473 the chain is on the lumenal, melanosome side; sequence HFPRACASSK…IKPYLEQAQR (455 aa). N-linked (GlcNAc...) asparagine glycosylation occurs at N86. Cu cation-binding residues include H180, H202, and H211. 3 N-linked (GlcNAc...) asparagine glycosylation sites follow: N230, N290, and N337. H363 and H367 together coordinate Cu cation. N371 carries an N-linked (GlcNAc...) asparagine glycan. H390 contributes to the Cu cation binding site. A helical membrane pass occupies residues 474–494; it reads IWPWLIGAAVVGSVLTAVLGG. Residues 495 to 530 are Cytoplasmic-facing; sequence LTSLLCRRKRNQLPEEKQPLLMEKEDYHNLMYQSHL.

This sequence belongs to the tyrosinase family. In terms of assembly, forms an OPN3-dependent complex with DCT in response to blue light in melanocytes. The cofactor is Cu(2+). Post-translationally, glycosylated.

It localises to the melanosome membrane. The protein resides in the melanosome. It carries out the reaction 2 L-dopa + O2 = 2 L-dopaquinone + 2 H2O. The catalysed reaction is L-tyrosine + O2 = L-dopaquinone + H2O. The enzyme catalyses 2 5,6-dihydroxyindole-2-carboxylate + O2 = 2 indole-5,6-quinone-2-carboxylate + 2 H2O. Functionally, this is a copper-containing oxidase that functions in the formation of pigments such as melanins and other polyphenolic compounds. Catalyzes the initial and rate limiting step in the cascade of reactions leading to melanin production from tyrosine. In addition to hydroxylating tyrosine to DOPA (3,4-dihydroxyphenylalanine), also catalyzes the oxidation of DOPA to DOPA-quinone, and possibly the oxidation of DHI (5,6-dihydroxyindole) to indole-5,6 quinone. This Bos taurus (Bovine) protein is Tyrosinase (TYR).